Consider the following 217-residue polypeptide: Thymidylate kinase (217 aa).

Residue 7–14 (GIDGAGKS) participates in ATP binding.

The protein belongs to the thymidylate kinase family.

It catalyses the reaction dTMP + ATP = dTDP + ADP. Functionally, phosphorylation of dTMP to form dTDP in both de novo and salvage pathways of dTTP synthesis. The sequence is that of Thymidylate kinase from Chlorobaculum parvum (strain DSM 263 / NCIMB 8327) (Chlorobium vibrioforme subsp. thiosulfatophilum).